Here is a 313-residue protein sequence, read N- to C-terminus: MAGFQHLSVMPEEVLRFLSPRPGGCYLDGTLGGGGHAALVAERCAPGGGTLIGMDRDLEALKAAAERLSRFGDAVRLLHGNFADIATRLDSLGVDALDGFVLDLGVSSHQLDTARRGFSFQQEGALDMRMDGDSGETAADLVNRLPEHELERIIREYGEERWAKRIASFIVRARSEAPIENTLRLVDIIKGAIPKAKWEERLHPATRTFQALRIAVNHELESLERGLKSAIDRLKPGGRGVVISFHSLEDRIVKHVFREYAAGCTCPRNLPVCVCGRQPRVRVLTGRPVTATEEELRDNPRSRSAKLRAVEKL.

S-adenosyl-L-methionine contacts are provided by residues Gly34 to His36, Asp55, Phe82, Asp103, and Gln110.

The protein belongs to the methyltransferase superfamily. RsmH family.

The protein localises to the cytoplasm. It carries out the reaction cytidine(1402) in 16S rRNA + S-adenosyl-L-methionine = N(4)-methylcytidine(1402) in 16S rRNA + S-adenosyl-L-homocysteine + H(+). In terms of biological role, specifically methylates the N4 position of cytidine in position 1402 (C1402) of 16S rRNA. In Pelobacter propionicus (strain DSM 2379 / NBRC 103807 / OttBd1), this protein is Ribosomal RNA small subunit methyltransferase H.